The sequence spans 393 residues: Chorismate synthase (393 aa).

Arg-40 and Arg-46 together coordinate NADP(+). FMN-binding positions include 129–131 (RSS), 249–250 (QA), Gly-301, 316–320 (KPIPT), and Arg-342.

It belongs to the chorismate synthase family. Homotetramer. It depends on FMNH2 as a cofactor.

It catalyses the reaction 5-O-(1-carboxyvinyl)-3-phosphoshikimate = chorismate + phosphate. Its pathway is metabolic intermediate biosynthesis; chorismate biosynthesis; chorismate from D-erythrose 4-phosphate and phosphoenolpyruvate: step 7/7. Its function is as follows. Catalyzes the anti-1,4-elimination of the C-3 phosphate and the C-6 proR hydrogen from 5-enolpyruvylshikimate-3-phosphate (EPSP) to yield chorismate, which is the branch point compound that serves as the starting substrate for the three terminal pathways of aromatic amino acid biosynthesis. This reaction introduces a second double bond into the aromatic ring system. In Geotalea daltonii (strain DSM 22248 / JCM 15807 / FRC-32) (Geobacter daltonii), this protein is Chorismate synthase.